Consider the following 171-residue polypeptide: S-ribosylhomocysteine lyase (171 aa).

Fe cation-binding residues include His-54, His-58, and Cys-128.

It belongs to the LuxS family. Homodimer. Fe cation is required as a cofactor.

The catalysed reaction is S-(5-deoxy-D-ribos-5-yl)-L-homocysteine = (S)-4,5-dihydroxypentane-2,3-dione + L-homocysteine. Functionally, involved in the synthesis of autoinducer 2 (AI-2) which is secreted by bacteria and is used to communicate both the cell density and the metabolic potential of the environment. The regulation of gene expression in response to changes in cell density is called quorum sensing. Catalyzes the transformation of S-ribosylhomocysteine (RHC) to homocysteine (HC) and 4,5-dihydroxy-2,3-pentadione (DPD). This is S-ribosylhomocysteine lyase from Escherichia fergusonii (strain ATCC 35469 / DSM 13698 / CCUG 18766 / IAM 14443 / JCM 21226 / LMG 7866 / NBRC 102419 / NCTC 12128 / CDC 0568-73).